Here is a 284-residue protein sequence, read N- to C-terminus: Phospholipid phosphatase 1 (284 aa).

Residues 1–6 (MFDKTR) lie on the Cytoplasmic side of the membrane. Positions 5–7 (TRL) match the PDZ-binding; involved in localization to the apical cell membrane motif. The helical transmembrane segment at 7-27 (LPYVALDVLCVLLAGLPFAIL) threads the bilayer. Residues 28–53 (TSRHTPFQRGVFCNDESIKYPYKEDT) are Extracellular-facing. The chain crosses the membrane as a helical span at residues 54–74 (IPYALLGGIIIPFSIIVIILG). Residues 75–94 (ETLSVYCNLLHSNSFIRNNY) are Cytoplasmic-facing. A helical membrane pass occupies residues 95-115 (IATIYKAIGTFLFGAAASQSL). Residues 116 to 164 (TDIAKYSIGRLRPHFLDVCDPDWSKINCSDGYIEYYICRGNAERVKEGR) are Extracellular-facing. A phosphatase sequence motif I region spans residues 120–128 (KYSIGRLRP). N-linked (GlcNAc...) asparagine glycosylation occurs at asparagine 142. A helical membrane pass occupies residues 165 to 185 (LSFYSGHSSFSMYCMLFVALY). The tract at residues 168–171 (YSGH) is phosphatase sequence motif II. Residue histidine 171 is the Proton donors of the active site. The Cytoplasmic segment spans residues 186–199 (LQARMKGDWARLLR). Residues 200-220 (PTLQFGLVAVSIYVGLSRVSD) traverse the membrane as a helical segment. The interval 216 to 227 (SRVSDYKHHWSD) is phosphatase sequence motif III. Residues 221 to 229 (YKHHWSDVL) are Extracellular-facing. Histidine 223 (nucleophile) is an active-site residue. The helical transmembrane segment at 230–250 (TGLIQGALVAILVAVYVSDFF) threads the bilayer. Topologically, residues 251–284 (KERTSFKERKEEDSHTTLHETPTTGNHYPSNHQP) are cytoplasmic. The interval 260–284 (KEEDSHTTLHETPTTGNHYPSNHQP) is disordered. Polar residues predominate over residues 269–284 (HETPTTGNHYPSNHQP).

It belongs to the PA-phosphatase related phosphoesterase family. In terms of assembly, forms functional homodimers and homooligomers that are not required for substrate recognition and catalytic activity. Can also form heterooligomers with PLPP2 and PLPP3. In terms of processing, N-glycosylated. N-linked sugars are of the complex type. N-glycosylation is not required for the phosphatase activity. Widely expressed with highest expression found in prostate. Found to be down-regulated in colon adenocarcinomas. In terms of tissue distribution, predominant in kidney, lung, placenta and liver. As to expression, predominant in heart and pancreas.

The protein localises to the cell membrane. It localises to the apical cell membrane. The protein resides in the membrane raft. Its subcellular location is the membrane. It is found in the caveola. The catalysed reaction is a 1,2-diacyl-sn-glycero-3-phosphate + H2O = a 1,2-diacyl-sn-glycerol + phosphate. The enzyme catalyses 1,2-dihexadecanoyl-sn-glycero-3-phosphate + H2O = 1,2-dihexadecanoyl-sn-glycerol + phosphate. It catalyses the reaction 1,2-di-(9Z-octadecenoyl)-sn-glycero-3-phosphate + H2O = 1,2-di-(9Z-octadecenoyl)-sn-glycerol + phosphate. It carries out the reaction a monoacyl-sn-glycero-3-phosphate + H2O = a monoacylglycerol + phosphate. The catalysed reaction is (9Z)-octadecenoyl-sn-glycero-3-phosphate + H2O = (9Z-octadecenoyl)-glycerol + phosphate. The enzyme catalyses a 1-acyl-sn-glycero-3-phosphate + H2O = a 1-acyl-sn-glycerol + phosphate. It catalyses the reaction 1-(9Z-octadecenoyl)-sn-glycero-3-phosphate + H2O = 1-(9Z-octadecenoyl)-sn-glycerol + phosphate. It carries out the reaction a 1,2-diacyl-sn-glycerol 3-diphosphate + H2O = a 1,2-diacyl-sn-glycero-3-phosphate + phosphate + H(+). The catalysed reaction is sphing-4-enine 1-phosphate + H2O = sphing-4-enine + phosphate. The enzyme catalyses an N-acylsphing-4-enine 1-phosphate + H2O = an N-acylsphing-4-enine + phosphate. It catalyses the reaction N-(octanoyl)-sphing-4-enine-1-phosphate + H2O = N-octanoylsphing-4-enine + phosphate. It carries out the reaction N-(9Z-octadecenoyl)-ethanolamine phosphate + H2O = N-(9Z-octadecenoyl) ethanolamine + phosphate. The catalysed reaction is 1-hexadecanoyl-2-(9Z-octadecenoyl)-sn-glycero-3-phosphate + H2O = 1-hexadecanoyl-2-(9Z-octadecenoyl)-sn-glycerol + phosphate. The protein operates within lipid metabolism; phospholipid metabolism. Its activity is regulated as follows. Magnesium-independent phospholipid phosphatase. Insensitive to N-ethylmaleimide. Inhibited by sphingosine, zinc ions and modestly by propanolol. Inhibited by vanadate. Magnesium-independent phospholipid phosphatase of the plasma membrane that catalyzes the dephosphorylation of a variety of glycerolipid and sphingolipid phosphate esters including phosphatidate/PA, lysophosphatidate/LPA, diacylglycerol pyrophosphate/DGPP, sphingosine 1-phosphate/S1P and ceramide 1-phosphate/C1P. Also acts on N-oleoyl ethanolamine phosphate/N-(9Z-octadecenoyl)-ethanolamine phosphate, a potential physiological compound. Through its extracellular phosphatase activity allows both the hydrolysis and the cellular uptake of these bioactive lipid mediators from the milieu, regulating signal transduction in different cellular processes. It is for instance essential for the extracellular hydrolysis of S1P and subsequent conversion into intracellular S1P. Involved in the regulation of inflammation, platelets activation, cell proliferation and migration among other processes. May also have an intracellular activity to regulate phospholipid-mediated signaling pathways. The chain is Phospholipid phosphatase 1 from Homo sapiens (Human).